The chain runs to 146 residues: Putative pre-16S rRNA nuclease (146 aa).

This sequence belongs to the YqgF nuclease family.

The protein resides in the cytoplasm. In terms of biological role, could be a nuclease involved in processing of the 5'-end of pre-16S rRNA. The polypeptide is Putative pre-16S rRNA nuclease (Dechloromonas aromatica (strain RCB)).